A 215-amino-acid polypeptide reads, in one-letter code: Nascent polypeptide-associated complex subunit alpha (215 aa).

Residues 1-81 are disordered; the sequence is MPGEATDTVP…SEKKARKAMS (81 aa). The span at 9-28 shows a compositional bias: polar residues; the sequence is VPATEQELPQPQAETGSGTE. The segment covering 29 to 42 has biased composition (acidic residues); sequence SDSDESVPELEEQD. A Phosphoserine; by ILK1 modification is found at serine 43. Positions 44–57 are enriched in low complexity; sequence TQATTQQAQLAAAA. Positions 69 to 80 are required for DNA-binding; that stretch reads QSRSEKKARKAM. The region spanning 70 to 135 is the NAC-A/B domain; it reads SRSEKKARKA…AKIEDLSQQA (66 aa). The segment at 93–108 is RNA/DNA-binding; sequence RVTIRKSKNILFVITK. Serine 132 carries the post-translational modification Phosphoserine. The residue at position 142 (lysine 142) is an N6-acetyllysine; alternate. Residue lysine 142 forms a Glycyl lysine isopeptide (Lys-Gly) (interchain with G-Cter in SUMO2); alternate linkage. Residue threonine 159 is modified to Phosphothreonine; by GSK3-beta. The residue at position 161 (threonine 161) is a Phosphothreonine. Phosphoserine is present on residues serine 166, serine 186, serine 191, and serine 203. One can recognise a UBA domain in the interval 176-213; it reads VEVKDIELVMSQANVSRAKAVRALKNNSNDIVNAIMEL.

This sequence belongs to the NAC-alpha family. As to quaternary structure, part of the nascent polypeptide-associated complex (NAC), which is a heterodimer of NACA and BTF3 (via NAC-A/B domains). NAC associates with ribosomes through the BTF3/NACB subunit and contacts the ribosomal protein L23, which is positioned near the exiting site. Both subunits can contact nascent polypeptide chains. NACA may also form homodimers, and only this form binds DNA. Interacts with TBP and JUN. In terms of processing, phosphorylation of Ser-43 by ILK during cell adhesion may promote nuclear localization. Phosphorylation of Thr-159 by GSK3B may promote proteasome mediated degradation.

It localises to the cytoplasm. The protein localises to the nucleus. Prevents inappropriate targeting of non-secretory polypeptides to the endoplasmic reticulum (ER). Binds to nascent polypeptide chains as they emerge from the ribosome and blocks their interaction with the signal recognition particle (SRP), which normally targets nascent secretory peptides to the ER. Also reduces the inherent affinity of ribosomes for protein translocation sites in the ER membrane (M sites). May act as a specific coactivator for JUN, binding to DNA and stabilizing the interaction of JUN homodimers with target gene promoters. The chain is Nascent polypeptide-associated complex subunit alpha (NACA) from Bos taurus (Bovine).